The primary structure comprises 372 residues: Mitogen-activated protein kinase spk1 (372 aa).

The segment covering 1-25 (MASATSTPTIADGNSNKESVATSRS) has biased composition (polar residues). Residues 1-29 (MASATSTPTIADGNSNKESVATSRSPHTH) form a disordered region. One can recognise a Protein kinase domain in the interval 39-327 (YEMINLIGQG…AEEALKHPYV (289 aa)). ATP-binding positions include 45–53 (IGQGAYGVV) and Lys-68. Asp-163 acts as the Proton acceptor in catalysis. Phosphothreonine is present on Thr-199. The TXY signature appears at 199–201 (TEY). Tyr-201 carries the phosphotyrosine modification.

This sequence belongs to the protein kinase superfamily. CMGC Ser/Thr protein kinase family. MAP kinase subfamily. Requires Mg(2+) as cofactor. Post-translationally, dually phosphorylated on Thr-199 and Tyr-201, which activates the enzyme.

Its subcellular location is the nucleus. It catalyses the reaction L-seryl-[protein] + ATP = O-phospho-L-seryl-[protein] + ADP + H(+). The catalysed reaction is L-threonyl-[protein] + ATP = O-phospho-L-threonyl-[protein] + ADP + H(+). With respect to regulation, activated by tyrosine and threonine phosphorylation. Its function is as follows. Involved in mating signal transduction pathway. The polypeptide is Mitogen-activated protein kinase spk1 (spk1) (Schizosaccharomyces pombe (strain 972 / ATCC 24843) (Fission yeast)).